We begin with the raw amino-acid sequence, 206 residues long: Thymidylate kinase (206 aa).

Residue 14-21 coordinates ATP; that stretch reads GGEGIGKS.

It belongs to the thymidylate kinase family.

The catalysed reaction is dTMP + ATP = dTDP + ADP. Phosphorylation of dTMP to form dTDP in both de novo and salvage pathways of dTTP synthesis. This chain is Thymidylate kinase, found in Rickettsia bellii (strain OSU 85-389).